Reading from the N-terminus, the 218-residue chain is Ribose-5-phosphate isomerase A (218 aa).

Substrate-binding positions include 28 to 31, 81 to 84, and 94 to 97; these read TGST, DGAD, and KGGG. Glu103 (proton acceptor) is an active-site residue. Position 121 (Lys121) interacts with substrate.

The protein belongs to the ribose 5-phosphate isomerase family. Homodimer.

It catalyses the reaction aldehydo-D-ribose 5-phosphate = D-ribulose 5-phosphate. The protein operates within carbohydrate degradation; pentose phosphate pathway; D-ribose 5-phosphate from D-ribulose 5-phosphate (non-oxidative stage): step 1/1. Catalyzes the reversible conversion of ribose-5-phosphate to ribulose 5-phosphate. This is Ribose-5-phosphate isomerase A from Shewanella woodyi (strain ATCC 51908 / MS32).